A 183-amino-acid chain; its full sequence is Ion-translocating oxidoreductase complex subunit B (183 aa).

The tract at residues M1 to A23 is hydrophobic. The 4Fe-4S domain maps to E29–R88. 12 residues coordinate [4Fe-4S] cluster: C46, C49, C54, C71, C113, C116, C119, C123, C143, C146, C149, and C153. 2 4Fe-4S ferredoxin-type domains span residues A104–K133 and M135–V163.

This sequence belongs to the 4Fe4S bacterial-type ferredoxin family. RnfB subfamily. The complex is composed of six subunits: RnfA, RnfB, RnfC, RnfD, RnfE and RnfG. It depends on [4Fe-4S] cluster as a cofactor.

The protein resides in the cell inner membrane. Functionally, part of a membrane-bound complex that couples electron transfer with translocation of ions across the membrane. This chain is Ion-translocating oxidoreductase complex subunit B, found in Azoarcus sp. (strain BH72).